A 200-amino-acid chain; its full sequence is Cytochrome c biogenesis ATP-binding export protein CcmA (200 aa).

The ABC transporter domain maps to 2 to 200 (LDVIELDFDY…NKADYEEYHL (199 aa)). An ATP-binding site is contributed by 34–41 (GSNGAGKT).

The protein belongs to the ABC transporter superfamily. CcmA exporter (TC 3.A.1.107) family. The complex is composed of two ATP-binding proteins (CcmA) and two transmembrane proteins (CcmB).

It is found in the cell inner membrane. The enzyme catalyses heme b(in) + ATP + H2O = heme b(out) + ADP + phosphate + H(+). Functionally, part of the ABC transporter complex CcmAB involved in the biogenesis of c-type cytochromes; once thought to export heme, this seems not to be the case, but its exact role is uncertain. Responsible for energy coupling to the transport system. This is Cytochrome c biogenesis ATP-binding export protein CcmA from Legionella pneumophila (strain Lens).